The primary structure comprises 399 residues: Probable 3-ketosteroid-9-alpha-monooxygenase, oxygenase component (399 aa).

The Rieske domain occupies 26 to 128 (WHCLGLVRDF…VAEVSGQLFV (103 aa)). Residues C67, H69, C86, and H89 each coordinate [2Fe-2S] cluster. N175, H181, H186, and D307 together coordinate Fe cation.

As to quaternary structure, homotrimer. The two-component system 3-ketosteroid-9-alpha-monooxygenase is composed of an oxygenase component KshA and a reductase component KshB. Requires [2Fe-2S] cluster as cofactor. Fe cation serves as cofactor.

In terms of biological role, could catalyze the introduction of a 9alpha-hydroxyl moiety into the ring B of 3-ketosteroid substrates. The polypeptide is Probable 3-ketosteroid-9-alpha-monooxygenase, oxygenase component (Rhodococcus rhodochrous).